Reading from the N-terminus, the 962-residue chain is Vacuolar membrane protease (962 aa).

The Cytoplasmic portion of the chain corresponds to 1 to 15 (MVSSRRGFNPIAFTP). Residues 16-36 (WPVTILSSLVYLALIIPIIVV) traverse the membrane as a helical segment. At 37–390 (HHLVPPAPKE…FQLNTLFGHS (354 aa)) the chain is on the vacuolar side. Asn-110 and Asn-113 each carry an N-linked (GlcNAc...) asparagine glycan. Residues His-169 and Asp-181 each contribute to the Zn(2+) site. The active-site Proton acceptor is the Glu-215. Residues Glu-216, Glu-241, and His-314 each contribute to the Zn(2+) site. A helical transmembrane segment spans residues 391–411 (VALLVVAPLLLIITSVALFAV). Residues 412 to 440 (DKMYMFSMYTYISESGGQVSLYGLRGMFR) lie on the Cytoplasmic side of the membrane. Residues 441 to 461 (FPLILGISTALTIALAFLIMK) form a helical membrane-spanning segment. Over 462-472 (VNPFIIYSSPY) the chain is Vacuolar. The chain crosses the membrane as a helical span at residues 473–493 (AVWSMMLSTCMFFAWFISCVA). Topologically, residues 494–503 (DFARPSALHR) are cytoplasmic. Residues 504 to 524 (AYSFSWMFGIMWVFLVIATVY) form a helical membrane-spanning segment. Topologically, residues 525 to 534 (QKQHGIASSY) are vacuolar. Residues 535–555 (FIVFYFAGVAVATWISYLELF) traverse the membrane as a helical segment. Residues 556–667 (GLPKTQDYAR…WSIYLMSSAW (112 aa)) are Cytoplasmic-facing. The interval 568 to 617 (GRLSDRTPSSDSHFLAPSADELPSSSSAAGRDFNPEDVEDEEPTESTSLL) is disordered. Over residues 602 to 611 (PEDVEDEEPT) the composition is skewed to acidic residues. A helical membrane pass occupies residues 668 to 688 (ILQFLLVAPIVIILLGQLGLF). Residues 689–704 (LTSATYQIGADGGSQL) are Vacuolar-facing. The helical transmembrane segment at 705 to 725 (VIYIGIAVLSVLILLPLFPFI) threads the bilayer. At 726-731 (HRFTYH) the chain is on the cytoplasmic side. Residues 732 to 752 (IPTFLLFILIGTLVYNLTAFP) form a helical membrane-spanning segment. Residues 753–962 (FSHSNRLKLA…LVEGSYSFKL (210 aa)) are Vacuolar-facing. An N-linked (GlcNAc...) asparagine glycan is attached at Asn-834.

It belongs to the peptidase M28 family. Requires Zn(2+) as cofactor.

The protein localises to the vacuole membrane. May be involved in vacuolar sorting and osmoregulation. The chain is Vacuolar membrane protease from Arthroderma benhamiae (strain ATCC MYA-4681 / CBS 112371) (Trichophyton mentagrophytes).